Here is a 352-residue protein sequence, read N- to C-terminus: Molybdenum import ATP-binding protein ModC (352 aa).

An ABC transporter domain is found at 1 to 229 (MLELNFSQTL…SVMNPWLPKE (229 aa)). 31-38 (GVSGAGKT) contributes to the ATP binding site. The Mop domain maps to 289–352 (QTSIRNVLRA…AQIKSVSITA (64 aa)).

This sequence belongs to the ABC transporter superfamily. Molybdate importer (TC 3.A.1.8) family. The complex is composed of two ATP-binding proteins (ModC), two transmembrane proteins (ModB) and a solute-binding protein (ModA).

The protein resides in the cell inner membrane. The catalysed reaction is molybdate(out) + ATP + H2O = molybdate(in) + ADP + phosphate + H(+). Part of the ABC transporter complex ModABC involved in molybdenum import. Responsible for energy coupling to the transport system. This chain is Molybdenum import ATP-binding protein ModC, found in Shigella flexneri.